The chain runs to 1312 residues: AT-rich interactive domain-containing protein 4B (1312 aa).

Disordered stretches follow at residues 124 to 166 and 266 to 306; these read PLTN…EDDR and KTEL…EPFP. Phosphoserine is present on residues S276, S295, and S296. Residues 277–305 show a composition bias toward acidic residues; that stretch reads EAEEEEEEEDDEKEKEDNSSEEEEEIEPF. The ARID domain maps to 306 to 398; that stretch reads PEERENFLQQ…YLYGFEEYCR (93 aa). Glycyl lysine isopeptide (Lys-Gly) (interchain with G-Cter in SUMO2) cross-links involve residues K429, K440, and K462. Disordered regions lie at residues 458–577, 635–680, 708–894, 909–1212, and 1252–1288; these read EIER…KVQV, IKHR…EMVS, QASE…TTGF, LNNS…NRLP, and SEVA…SITA. The tract at residues 465 to 473 is antigenic epitope; the sequence is IKPSLGSKK. S483 is modified (phosphoserine). Positions 483-496 are enriched in basic and acidic residues; sequence SDQEKEVNIKKPED. K517 is covalently cross-linked (Glycyl lysine isopeptide (Lys-Gly) (interchain with G-Cter in SUMO2)). Residues 532-567 are compositionally biased toward acidic residues; the sequence is NKEEDEDDEEAEEEEEEEEEEEDEDDDDNNEEEEFE. The region spanning 572–624 is the Tudor-knot domain; that stretch reads GMKVQVRYGRGKNQKMYEASIKDSDVEGGEVLYLVHYCGWNVRYDEWIKADKI. The segment covering 643–656 has biased composition (basic and acidic residues); sequence NKLDKEKDKDEKYS. A phosphoserine mark is found at S666, S675, and S717. Basic and acidic residues-rich tracts occupy residues 722-754 and 778-787; these read ERGA…KEEQ and SPERLRKDIE. Positions 728–754 form a coiled coil; sequence MDNNGKEESKIDHLTNNRNDLISKEEQ. A Glycyl lysine isopeptide (Lys-Gly) (interchain with G-Cter in SUMO2) cross-link involves residue K751. S778 and S790 each carry phosphoserine. The span at 788-799 shows a compositional bias: acidic residues; the sequence is VLSEDTDYEEDE. T793 is modified (phosphothreonine). 4 stretches are compositionally biased toward basic and acidic residues: residues 807 to 816, 828 to 852, 909 to 927, and 995 to 1010; these read VKKDTTDKSS, CNTE…KESL, LNNS…RKDV, and KPIE…RKAE. A Phosphoserine modification is found at S1014. T1026 carries the post-translational modification Phosphothreonine. The segment covering 1028–1037 has biased composition (low complexity); sequence ESPSSVTVTE. S1029 carries the post-translational modification Phosphoserine. A compositionally biased stretch (polar residues) spans 1038–1047; it reads GSRQQSSVTV. Basic and acidic residues predominate over residues 1056 to 1065; it reads EEVRSIKSET. Low complexity predominate over residues 1087 to 1101; that stretch reads SSPAGFDASVSSSSS. Residues 1130–1137 form an antigenic epitope region; it reads KKQKRSHK. A compositionally biased stretch (basic residues) spans 1130 to 1148; sequence KKQKRSHKATVVNNKKKGK. The residue at position 1150 (T1150) is a Phosphothreonine. 4 positions are modified to phosphoserine: S1152, S1153, S1155, and S1159. Positions 1162-1191 are enriched in polar residues; the sequence is ESITKSQPVKSVSTGMKSHSTKSPARTQSP. Basic and acidic residues predominate over residues 1196–1208; sequence KNGDKDPDLKEPS. A coiled-coil region spans residues 1231 to 1270; sequence ERITILQEKLQEIRKHYLSLKSEVASIDRRRKRLKKKERE. Low complexity predominate over residues 1272–1288; the sequence is AATSSSSSSPSSSSITA.

Component of a Sin3A corepressor complex consisting of SIN3A, SAP130, SUDS3/SAP45, SAP180, HDAC1 and HDAC2. Interacts with ARID4A. Interacts with AR. As to expression, highly expressed in the testis and in breast, lung, colon, pancreatic and ovarian cancers. Expressed at low levels in the thymus, prostate and ovary.

The protein resides in the nucleus. It is found in the cytoplasm. In terms of biological role, acts as a transcriptional repressor. May function in the assembly and/or enzymatic activity of the Sin3A corepressor complex or in mediating interactions between the complex and other regulatory complexes. Plays a role in the regulation of epigenetic modifications at the PWS/AS imprinting center near the SNRPN promoter, where it might function as part of a complex with RB1 and ARID4A. Involved in spermatogenesis, together with ARID4A, where it functions as a transcriptional coactivator for AR (androgen receptor) and enhances expression of genes required for sperm maturation. Regulates expression of the tight junction protein CLDN3 in the testis, which is important for integrity of the blood-testis barrier. Plays a role in myeloid homeostasis where it regulates the histone methylation state of bone marrow cells and expression of various genes involved in hematopoiesis. May function as a leukemia suppressor. The sequence is that of AT-rich interactive domain-containing protein 4B (ARID4B) from Homo sapiens (Human).